Here is a 251-residue protein sequence, read N- to C-terminus: DNA repair protein RecO (251 aa).

The protein belongs to the RecO family.

Involved in DNA repair and RecF pathway recombination. The polypeptide is DNA repair protein RecO (Macrococcus caseolyticus (strain JCSC5402) (Macrococcoides caseolyticum)).